The chain runs to 188 residues: Peptidyl-tRNA hydrolase (188 aa).

Tyr-14 lines the tRNA pocket. His-19 (proton acceptor) is an active-site residue. Residues Tyr-64, Asn-66, and Asn-112 each contribute to the tRNA site.

Belongs to the PTH family. As to quaternary structure, monomer.

It is found in the cytoplasm. The enzyme catalyses an N-acyl-L-alpha-aminoacyl-tRNA + H2O = an N-acyl-L-amino acid + a tRNA + H(+). Its function is as follows. Hydrolyzes ribosome-free peptidyl-tRNAs (with 1 or more amino acids incorporated), which drop off the ribosome during protein synthesis, or as a result of ribosome stalling. In terms of biological role, catalyzes the release of premature peptidyl moieties from peptidyl-tRNA molecules trapped in stalled 50S ribosomal subunits, and thus maintains levels of free tRNAs and 50S ribosomes. The sequence is that of Peptidyl-tRNA hydrolase from Bacillus licheniformis (strain ATCC 14580 / DSM 13 / JCM 2505 / CCUG 7422 / NBRC 12200 / NCIMB 9375 / NCTC 10341 / NRRL NRS-1264 / Gibson 46).